A 325-amino-acid chain; its full sequence is tRNA N6-adenosine threonylcarbamoyltransferase (325 aa).

Residues His107, His111, and Tyr127 each coordinate Fe cation. Residues 127 to 131 (YVSGG), Asp159, Gly172, Glu176, and Asn257 contribute to the substrate site. Asp285 is a binding site for Fe cation.

Belongs to the KAE1 / TsaD family. In terms of assembly, monomer. Component of the KEOPS complex that consists of Kae1, Bud32, Cgi121 and Pcc1; the whole complex dimerizes. Fe(2+) serves as cofactor.

The protein resides in the cytoplasm. The catalysed reaction is L-threonylcarbamoyladenylate + adenosine(37) in tRNA = N(6)-L-threonylcarbamoyladenosine(37) in tRNA + AMP + H(+). In terms of biological role, required for the formation of a threonylcarbamoyl group on adenosine at position 37 (t(6)A37) in tRNAs that read codons beginning with adenine. Is a component of the KEOPS complex that is probably involved in the transfer of the threonylcarbamoyl moiety of threonylcarbamoyl-AMP (TC-AMP) to the N6 group of A37. Kae1 likely plays a direct catalytic role in this reaction, but requires other protein(s) of the complex to fulfill this activity. In Thermococcus gammatolerans (strain DSM 15229 / JCM 11827 / EJ3), this protein is tRNA N6-adenosine threonylcarbamoyltransferase.